We begin with the raw amino-acid sequence, 407 residues long: Imidazolonepropionase (407 aa).

Fe(3+) contacts are provided by His68 and His70. Zn(2+) contacts are provided by His68 and His70. Positions 77, 140, and 173 each coordinate 4-imidazolone-5-propanoate. Tyr140 is an N-formimidoyl-L-glutamate binding site. His238 lines the Fe(3+) pocket. His238 is a binding site for Zn(2+). Gln241 contacts 4-imidazolone-5-propanoate. Asp313 serves as a coordination point for Fe(3+). Asp313 serves as a coordination point for Zn(2+). The N-formimidoyl-L-glutamate site is built by Asn315 and Gly317. A 4-imidazolone-5-propanoate-binding site is contributed by Thr318.

It belongs to the metallo-dependent hydrolases superfamily. HutI family. It depends on Zn(2+) as a cofactor. Fe(3+) serves as cofactor.

Its subcellular location is the cytoplasm. The enzyme catalyses 4-imidazolone-5-propanoate + H2O = N-formimidoyl-L-glutamate. The protein operates within amino-acid degradation; L-histidine degradation into L-glutamate; N-formimidoyl-L-glutamate from L-histidine: step 3/3. Functionally, catalyzes the hydrolytic cleavage of the carbon-nitrogen bond in imidazolone-5-propanoate to yield N-formimidoyl-L-glutamate. It is the third step in the universal histidine degradation pathway. The sequence is that of Imidazolonepropionase from Burkholderia ambifaria (strain ATCC BAA-244 / DSM 16087 / CCUG 44356 / LMG 19182 / AMMD) (Burkholderia cepacia (strain AMMD)).